The primary structure comprises 202 residues: LexA repressor (202 aa).

A DNA-binding region (H-T-H motif) is located at residues 29–49 (VREICTAVGLKSTSTVHSYLE). Residues serine 125 and lysine 162 each act as for autocatalytic cleavage activity in the active site.

It belongs to the peptidase S24 family. Homodimer.

It catalyses the reaction Hydrolysis of Ala-|-Gly bond in repressor LexA.. Its function is as follows. Represses a number of genes involved in the response to DNA damage (SOS response), including recA and lexA. In the presence of single-stranded DNA, RecA interacts with LexA causing an autocatalytic cleavage which disrupts the DNA-binding part of LexA, leading to derepression of the SOS regulon and eventually DNA repair. This chain is LexA repressor, found in Clostridium kluyveri (strain NBRC 12016).